An 847-amino-acid polypeptide reads, in one-letter code: Alanine--tRNA ligase (847 aa).

Residues His-554, His-558, Cys-656, and His-660 each coordinate Zn(2+).

Belongs to the class-II aminoacyl-tRNA synthetase family. Zn(2+) serves as cofactor.

Its subcellular location is the cytoplasm. It catalyses the reaction tRNA(Ala) + L-alanine + ATP = L-alanyl-tRNA(Ala) + AMP + diphosphate. Catalyzes the attachment of alanine to tRNA(Ala) in a two-step reaction: alanine is first activated by ATP to form Ala-AMP and then transferred to the acceptor end of tRNA(Ala). Also edits incorrectly charged Ser-tRNA(Ala) and Gly-tRNA(Ala) via its editing domain. The polypeptide is Alanine--tRNA ligase (Helicobacter pylori (strain ATCC 700392 / 26695) (Campylobacter pylori)).